A 632-amino-acid chain; its full sequence is MQPGEGYHYDSGPNNAVHPHQLPAGSRLNQYLANNNRQGPSFGPGTPINVNAPVFVPKHQQPQPAQVAAPPPMVNQFAQLSIHDVPHQMIPFGQINGPPTFGPGQHMNHRASHHHQSPQMAQQPPTLQQSAYDRYQLENRGGTTYFYTEPTEAGPDDEQYTEAEAPDGSILVNTPGAFGYNAPLPISHMARFRGKANANLQTQFISPEIRMELINRQLAYDTKADSAIIGDIPHSVEHFSNLVPLEIAGIQSQTTYKAFSCRDGNYYCLRRIHGNRIQHPGKQTHLVEQWKKLVHGNVVPLREVLINCRAFDDSSLIFAYDYYPLAGTLMEKHFDTKSGTFFDPNNGFRISSPMNVSMPISGTGAHETLIWSYIIQIAAALRAIHSSGLACRTLDLNKIITYGNKIMISFCGIQDVLDPDPTTIQQQQNEDLNMFGNLIVALATGRANGWRKDLYQQLKKFIEDTYSMDLRNVIGFLHNNSTRKTINEIMPMIGGRFFTVMENMQAKTDVLEAELSREMENGRLFRLVAKMNTVLERVEHGTDDAWSETGDRFMLKLFRDYVFHQVTDQGKAWLDMAHIVQCLNKLDCGSQEKIEMVSRSGDTQIIIDYATLKRCLDKSFRDLLGTNMMLHR.

2 disordered regions span residues 1 to 22 (MQPGEGYHYDSGPNNAVHPHQL) and 99 to 127 (PTFGPGQHMNHRASHHHQSPQMAQQPPTL). A compositionally biased stretch (basic residues) spans 107–116 (MNHRASHHHQ). The span at 117-127 (SPQMAQQPPTL) shows a compositional bias: polar residues. Residues 223–494 (KADSAIIGDI…TINEIMPMIG (272 aa)) are pseudokinase domain. ATP-binding positions include Arg-270, 321–328 (DYYPLAGT), and 397–398 (NK). Residues 495 to 533 (GRFFTVMENMQAKTDVLEAELSREMENGRLFRLVAKMNT) are a coiled coil. The interval 534–632 (VLERVEHGTD…LLGTNMMLHR (99 aa)) is knob domain.

It belongs to the protein kinase superfamily. PAN3 family. In terms of assembly, homodimer. Forms a heterotrimer with a catalytic subunit PAN2 to form the poly(A)-nuclease (PAN) deadenylation complex. Interacts (via PAM-2 motif) with poly(A)-binding protein (via PABC domain), conferring substrate specificity of the enzyme complex. Interacts with the GW182 family protein ain-1. As to expression, highly expressed in germ cells.

The protein resides in the cytoplasm. Its subcellular location is the P-body. In terms of biological role, regulatory subunit of the poly(A)-nuclease (PAN) deadenylation complex, one of two cytoplasmic mRNA deadenylases involved in general and miRNA-mediated mRNA turnover. PAN specifically shortens poly(A) tails of RNA and the activity is stimulated by poly(A)-binding protein (PABP). PAN deadenylation is followed by rapid degradation of the shortened mRNA tails by the CCR4-NOT complex. Deadenylated mRNAs are then degraded by two alternative mechanisms, namely exosome-mediated 3'-5' exonucleolytic degradation, or deadenylation-dependent mRNA decaping and subsequent 5'-3' exonucleolytic degradation by XRN1. PAN3 acts as a positive regulator for PAN activity, recruiting the catalytic subunit PAN2 to mRNA via its interaction with RNA and PABP, and to miRNA targets via its interaction with GW182 family proteins. Within the PAN complex, may positively regulate fertility. The chain is PAN2-PAN3 deadenylation complex subunit PAN3 from Caenorhabditis elegans.